Consider the following 65-residue polypeptide: Large ribosomal subunit protein bL32 (65 aa).

Basic residues predominate over residues 1–19; that stretch reads MAVQKSRKTPSKRGMRRSH. A disordered region spans residues 1–32; sequence MAVQKSRKTPSKRGMRRSHNALTNPTLSEDQE.

This sequence belongs to the bacterial ribosomal protein bL32 family.

The polypeptide is Large ribosomal subunit protein bL32 (Ruthia magnifica subsp. Calyptogena magnifica).